Here is a 495-residue protein sequence, read N- to C-terminus: Sorting nexin-4 (495 aa).

Low complexity predominate over residues Gly-20–Gly-31. The interval Gly-20 to Met-51 is disordered. A PX domain is found at Val-62–Ala-184. Positions 105, 107, 131, and 150 each coordinate a 1,2-diacyl-sn-glycero-3-phospho-(1D-myo-inositol-3-phosphate). Residues Ser-193–Ala-207 show a composition bias toward low complexity. The disordered stretch occupies residues Ser-193–Thr-219. The segment covering His-208–Thr-219 has biased composition (gly residues). The stretch at Asp-406–Val-443 forms a coiled coil.

Belongs to the sorting nexin family.

It is found in the cytoplasm. It localises to the cytosol. The protein localises to the preautophagosomal structure membrane. The protein resides in the endosome membrane. Its subcellular location is the mitochondrion membrane. It is found in the lipid droplet. Its function is as follows. Sorting nexin, involved in the separation or division of vacuoles throughout the entire life cycle of the cells. Involved in retrieval of late-Golgi SNAREs from post-Golgi endosomes to the trans-Golgi network, for cytoplasm to vacuole transport (Cvt), and autophagy of large cargos including mitophagy, pexophagy and glycophagy. Required for invasion of the rice sheath. This chain is Sorting nexin-4 (SNX4), found in Pyricularia oryzae (strain 70-15 / ATCC MYA-4617 / FGSC 8958) (Rice blast fungus).